We begin with the raw amino-acid sequence, 248 residues long: 23S rRNA (guanosine-2'-O-)-methyltransferase RlmB (248 aa).

S-adenosyl-L-methionine-binding residues include glycine 200, isoleucine 220, and leucine 229.

The protein belongs to the class IV-like SAM-binding methyltransferase superfamily. RNA methyltransferase TrmH family. RlmB subfamily.

The protein localises to the cytoplasm. It carries out the reaction guanosine(2251) in 23S rRNA + S-adenosyl-L-methionine = 2'-O-methylguanosine(2251) in 23S rRNA + S-adenosyl-L-homocysteine + H(+). Functionally, specifically methylates the ribose of guanosine 2251 in 23S rRNA. In Acinetobacter baylyi (strain ATCC 33305 / BD413 / ADP1), this protein is 23S rRNA (guanosine-2'-O-)-methyltransferase RlmB.